We begin with the raw amino-acid sequence, 186 residues long: MATKYEMSKTYQYRKVMKPLLERKRRARINKCLDELKDLMAECVAQTGDAKFEKADILEVTVQHLRKLKESKKHVPANPEQSFRAGYIRAANEVSRALASLPRVDVAFGTTLMTHLGMRLNQLEQPMEQPQAVNTPLSIVCGSSSSSSTYSSASSCSSISPVSSGYASDNESLLQISSPGQVWRPW.

In terms of domain architecture, bHLH spans 13-68; the sequence is YRKVMKPLLERKRRARINKCLDELKDLMAECVAQTGDAKFEKADILEVTVQHLRKL. In terms of domain architecture, Orange spans 83–116; that stretch reads FRAGYIRAANEVSRALASLPRVDVAFGTTLMTHL. Residues 183–186 carry the WRPW motif motif; that stretch reads WRPW.

Transcription repression requires formation of a complex with a corepressor protein (Groucho). Forms homodimers.

Its subcellular location is the nucleus. Functionally, participates in the control of cell fate choice by uncommitted neuroectodermal cells in the embryo. Transcriptional repressor. Binds DNA on N-box motifs: 5'-CACNAG-3'. This chain is Enhancer of split m7 protein, found in Drosophila melanogaster (Fruit fly).